The sequence spans 297 residues: RNA polymerase sigma-F factor (297 aa).

Residues 1–46 form a disordered region; sequence MTVPASTAPQVPPQQDPQVPHPQEPREEPHEEPPSPPAAPRPQSRG. Over residues 10-22 the composition is skewed to pro residues; it reads QVPPQQDPQVPHP. The segment covering 23–33 has biased composition (basic and acidic residues); the sequence is QEPREEPHEEP. The short motif at 101 to 114 is the Polymerase core binding element; the sequence is DVVQVGTIGLINAI. Residues 264–283 constitute a DNA-binding region (H-T-H motif); sequence QSQISAELGVSQMHVSRLLA.

It belongs to the sigma-70 factor family. SigB subfamily.

Sigma factors are initiation factors that promote the attachment of RNA polymerase to specific initiation sites and are then released. This sigma factor is required for normal spore maturation. The polypeptide is RNA polymerase sigma-F factor (sigF) (Kitasatospora aureofaciens (Streptomyces aureofaciens)).